Reading from the N-terminus, the 425-residue chain is Elongation factor 1-alpha (425 aa).

Residues 5–221 (KPHMNLAVIG…DLFKMPDMPT (217 aa)) form the tr-type G domain. Residues 14 to 21 (GHIDHGKS) are G1. 14–21 (GHIDHGKS) contacts GTP. Residue Ser21 coordinates Mg(2+). The G2 stretch occupies residues 70–74 (GITID). The tract at residues 91-94 (DCPG) is G3. GTP-binding positions include 91–95 (DCPGH) and 146–149 (NKMD). Residues 146–149 (NKMD) are G4. The interval 185-187 (SAF) is G5.

Belongs to the TRAFAC class translation factor GTPase superfamily. Classic translation factor GTPase family. EF-Tu/EF-1A subfamily.

The protein localises to the cytoplasm. The enzyme catalyses GTP + H2O = GDP + phosphate + H(+). In terms of biological role, GTP hydrolase that promotes the GTP-dependent binding of aminoacyl-tRNA to the A-site of ribosomes during protein biosynthesis. The sequence is that of Elongation factor 1-alpha from Methanocorpusculum labreanum (strain ATCC 43576 / DSM 4855 / Z).